Reading from the N-terminus, the 540-residue chain is Coiled-coil domain-containing protein 116 (540 aa).

Residues 79–102 (QVLDSLQTVVEQATECVATMKTEA) adopt a coiled-coil conformation. Residues 347 to 400 (PGNSDLQPSSKASLPTDREARGETCYSPTSASSPKTSHRKSKDRRGSPSNAVQM) are disordered. Composition is skewed to polar residues over residues 350-359 (SDLQPSSKAS) and 372-381 (YSPTSASSPK). Ser-393 carries the phosphoserine modification.

The protein resides in the cytoplasm. Its subcellular location is the cytoskeleton. The protein localises to the microtubule organizing center. It localises to the centrosome. The sequence is that of Coiled-coil domain-containing protein 116 (Ccdc116) from Rattus norvegicus (Rat).